The sequence spans 1748 residues: Tight junction protein 1 (1748 aa).

A PDZ 1 domain is found at 23–110 (TVTLHRAPGF…NAKITIRRKK (88 aa)). A compositionally biased stretch (basic residues) spans 102–112 (AKITIRRKKKV). The disordered stretch occupies residues 102–189 (AKITIRRKKK…QPAKPTKVTL (88 aa)). Residues 123–136 (PVSDNEEDSYDEEI) are compositionally biased toward acidic residues. Serine 125 is modified (phosphoserine). Tyrosine 132 bears the Phosphotyrosine mark. Residues 149-175 (RRSEKIWPRDRSASRERSLSPRSDRRS) are compositionally biased toward basic and acidic residues. Phosphoserine occurs at positions 175, 178, and 179. Threonine 185 bears the Phosphothreonine mark. Positions 186 to 264 (KVTLVKSRKN…KLKMVVQRDE (79 aa)) constitute a PDZ 2 domain. 2 positions are modified to phosphoserine: serine 212 and serine 241. Position 267 is a phosphothreonine (threonine 267). Serine 275, serine 277, serine 280, serine 284, serine 290, serine 294, serine 297, serine 300, serine 323, serine 329, serine 334, serine 337, and serine 353 each carry phosphoserine. The segment at 295 to 396 (LASDHSGRSH…PVYAQVGQPD (102 aa)) is disordered. Basic and acidic residues predominate over residues 299–327 (HSGRSHDRPPRRSRSRSPDQRSEPSDHSR). Residues 329 to 338 (SPQQPSNGSL) are compositionally biased toward polar residues. Threonine 354 bears the Phosphothreonine mark. Positions 357–377 (KHADDHTPKTVEEVTVERNEK) are enriched in basic and acidic residues. The region spanning 421 to 502 (SMKLVKFRKG…GEEVTILAQK (82 aa)) is the PDZ 3 domain. Positions 516–584 (GDSFYIRTHF…PNKNRAEQLA (69 aa)) constitute an SH3 domain. In terms of domain architecture, Guanylate kinase-like spans 598–779 (RADFWRFRGL…TTTINLNSMN (182 aa)). 2 positions are modified to phosphoserine: serine 617 and serine 622. Residues 633 to 876 (YERVVLREAG…GTPPESAITR (244 aa)) are occludin (OCLN)-binding region. Threonine 809 carries the phosphothreonine modification. 2 positions are modified to phosphoserine: serine 810 and serine 821. Tyrosine 822 carries the phosphotyrosine modification. 3 positions are modified to phosphoserine: serine 824, serine 828, and serine 837. Disordered stretches follow at residues 825–1081 (APGS…LRYE) and 1095–1587 (DDKQ…PEFD). Residues threonine 846, threonine 848, threonine 854, threonine 861, and threonine 868 each carry the phosphothreonine modification. A compositionally biased stretch (basic and acidic residues) spans 879-892 (EPVREDSSGMHHEN). A compositionally biased stretch (low complexity) spans 893–906 (QTYPPYSPQAQPQP). Position 912 is a phosphoserine (serine 912). Composition is skewed to polar residues over residues 934 to 953 (PETNPASSTSAVNHNVNLTN) and 963 to 979 (PSTSYSPQADSLRTPST). A Phosphoserine modification is found at serine 968. Residues 998-1014 (DPTKVYRKDPYPEEMMR) are compositionally biased toward basic and acidic residues. Over residues 1061–1072 (YESSSYTDQFSR) the composition is skewed to polar residues. Phosphoserine is present on residues serine 1071, serine 1111, and serine 1139. Positions 1110-1125 (HSQDLDSRQHPEESSE) are enriched in basic and acidic residues. Tyrosine 1140 and tyrosine 1165 each carry phosphotyrosine. Residues 1151 to 1371 (RASALRHEEQ…FDRRSFENKP (221 aa)) are actin-binding region (ABR). Composition is skewed to basic and acidic residues over residues 1269–1286 (KMFENKRSASLETKKDVN) and 1336–1347 (PPEDIVRSNHYD). Position 1354 is a phosphotyrosine (tyrosine 1354). A Phosphoserine modification is found at serine 1366. The span at 1389-1400 (SQNQSNFSSYSS) shows a compositional bias: low complexity. Residues 1403 to 1420 (KPPEADGVDRSFGEKRYE) show a composition bias toward basic and acidic residues. At serine 1413 the chain carries Phosphoserine. Composition is skewed to polar residues over residues 1459 to 1470 (NSVSLDFQNSLV) and 1512 to 1522 (GTEQTQKTVTP). Residues 1538–1547 (PFERKFESPK) show a composition bias toward basic and acidic residues. Residues serine 1545 and serine 1617 each carry the phosphoserine modification. Residues 1634 to 1748 (ATARGIFNSN…NCVSVLIDHF (115 aa)) enclose the ZU5 domain.

This sequence belongs to the MAGUK family. In terms of assembly, homodimer. Forms heterodimers TJP3. Forms a heterodimer (via PDZ2 domain) with TJP2/ZO2 (via PDZ2 domain). Interacts with OCLN, CALM, claudins, CGN/cingulin, CXADR, GJA12, GJD3 and UBN1. Interacts (via ZU5 domain) with CDC42BPB and MYZAP. Interacts (via PDZ domain) with GJA1. Interacts (via PDZ domains) with ANKRD2. Interacts with POPDC1 (via the C-terminus cytoplasmic tail). Interacts with HSPA4 and KIRREL1. Interacts with DLL1. Interacts with USP53 (via the C-terminal region). Interacts (via ABR region) with F-actin. Interacts with DNMBP (via C-terminal domain); required for the apical cell-cell junction localization of DNMBP. Interacts with SPEF1. Interacts (via N-terminus) with CTNNA1. Interacts with CLDN18. Interacts with CLDN16 (via TRV motif); this is a prerequisite for anchoring of CLDN16 at the tight junction. Interacts with PKP1; the interaction facilitates TJP1/ZO-1 localization to the plasma membrane. Interacts with PATJ (via PDZ1-6 domains); the interaction is required for attachment and extension of TJP1/ZO1 condensates along the apical cell interface. In terms of processing, phosphorylated at tyrosine redidues in response to epidermal growth factor (EGF). This response is dependent on an intact actin microfilament system. Dephosphorylated by PTPRJ. In terms of tissue distribution, the alpha-containing isoform is found in most epithelial cell junctions. The short isoform is found both in endothelial cells and the highly specialized epithelial junctions of renal glomeruli and Sertoli cells of the seminiferous tubules.

It is found in the cell membrane. The protein resides in the cell junction. Its subcellular location is the tight junction. It localises to the gap junction. The protein localises to the cell projection. It is found in the podosome. Its function is as follows. TJP1, TJP2, and TJP3 are closely related scaffolding proteins that link tight junction (TJ) transmembrane proteins such as claudins, junctional adhesion molecules, and occludin to the actin cytoskeleton. Forms a multistranded TJP1/ZO1 condensate which elongates to form a tight junction belt, the belt is anchored at the apical cell membrane via interaction with PATJ. The tight junction acts to limit movement of substances through the paracellular space and as a boundary between the compositionally distinct apical and basolateral plasma membrane domains of epithelial and endothelial cells. Necessary for lumenogenesis, and particularly efficient epithelial polarization and barrier formation. Plays a role in the regulation of cell migration by targeting CDC42BPB to the leading edge of migrating cells. Plays an important role in podosome formation and associated function, thus regulating cell adhesion and matrix remodeling. With TJP2 and TJP3, participates in the junctional retention and stability of the transcription factor DBPA, but is not involved in its shuttling to the nucleus. May play a role in mediating cell morphology changes during ameloblast differentiation via its role in tight junctions. This Homo sapiens (Human) protein is Tight junction protein 1.